A 109-amino-acid polypeptide reads, in one-letter code: Large ribosomal subunit protein uL24 (109 aa).

It belongs to the universal ribosomal protein uL24 family. In terms of assembly, part of the 50S ribosomal subunit.

Functionally, one of two assembly initiator proteins, it binds directly to the 5'-end of the 23S rRNA, where it nucleates assembly of the 50S subunit. One of the proteins that surrounds the polypeptide exit tunnel on the outside of the subunit. In Rickettsia africae (strain ESF-5), this protein is Large ribosomal subunit protein uL24.